A 545-amino-acid chain; its full sequence is Chaperonin GroEL 1 (545 aa).

ATP is bound by residues 30–33 (TLGP), Lys51, 87–91 (DGTTT), Gly415, 479–481 (NAA), and Asp495.

Belongs to the chaperonin (HSP60) family. As to quaternary structure, forms a cylinder of 14 subunits composed of two heptameric rings stacked back-to-back. Interacts with the co-chaperonin GroES.

The protein localises to the cytoplasm. The enzyme catalyses ATP + H2O + a folded polypeptide = ADP + phosphate + an unfolded polypeptide.. Functionally, together with its co-chaperonin GroES, plays an essential role in assisting protein folding. The GroEL-GroES system forms a nano-cage that allows encapsulation of the non-native substrate proteins and provides a physical environment optimized to promote and accelerate protein folding. This chain is Chaperonin GroEL 1, found in Methylococcus capsulatus (strain ATCC 33009 / NCIMB 11132 / Bath).